Reading from the N-terminus, the 143-residue chain is Large ribosomal subunit protein uL11 (143 aa).

The protein belongs to the universal ribosomal protein uL11 family. As to quaternary structure, part of the ribosomal stalk of the 50S ribosomal subunit. Interacts with L10 and the large rRNA to form the base of the stalk. L10 forms an elongated spine to which L12 dimers bind in a sequential fashion forming a multimeric L10(L12)X complex. Post-translationally, one or more lysine residues are methylated.

Functionally, forms part of the ribosomal stalk which helps the ribosome interact with GTP-bound translation factors. This Saccharophagus degradans (strain 2-40 / ATCC 43961 / DSM 17024) protein is Large ribosomal subunit protein uL11.